The primary structure comprises 446 residues: N-succinylarginine dihydrolase (446 aa).

Residues 19–28 (SGLSYGNVAS), Asn-110, and 137–138 (HR) contribute to the substrate site. Residue Glu-174 is part of the active site. Arg-214 provides a ligand contact to substrate. Residue His-250 is part of the active site. Residues Asp-252 and Asn-363 each contribute to the substrate site. The active-site Nucleophile is the Cys-369.

This sequence belongs to the succinylarginine dihydrolase family. In terms of assembly, homodimer.

The enzyme catalyses N(2)-succinyl-L-arginine + 2 H2O + 2 H(+) = N(2)-succinyl-L-ornithine + 2 NH4(+) + CO2. The protein operates within amino-acid degradation; L-arginine degradation via AST pathway; L-glutamate and succinate from L-arginine: step 2/5. Catalyzes the hydrolysis of N(2)-succinylarginine into N(2)-succinylornithine, ammonia and CO(2). This chain is N-succinylarginine dihydrolase, found in Hahella chejuensis (strain KCTC 2396).